Consider the following 119-residue polypeptide: MATDTTEVKAIARFIRMSPYKVRRVLDQIRGLSYREALIILEFMPYRATEPVLTLLRSAAANAEHNAGLDRAELVITQAYADQGPVLKRFQPRAQGRAYQIRKPTCHITLAVAANAGAK.

Belongs to the universal ribosomal protein uL22 family. In terms of assembly, part of the 50S ribosomal subunit.

This protein binds specifically to 23S rRNA; its binding is stimulated by other ribosomal proteins, e.g. L4, L17, and L20. It is important during the early stages of 50S assembly. It makes multiple contacts with different domains of the 23S rRNA in the assembled 50S subunit and ribosome. Functionally, the globular domain of the protein is located near the polypeptide exit tunnel on the outside of the subunit, while an extended beta-hairpin is found that lines the wall of the exit tunnel in the center of the 70S ribosome. The polypeptide is Large ribosomal subunit protein uL22 (Trichormus variabilis (strain ATCC 29413 / PCC 7937) (Anabaena variabilis)).